A 185-amino-acid chain; its full sequence is Large ribosomal subunit protein uL5 (185 aa).

The protein belongs to the universal ribosomal protein uL5 family. Part of the 50S ribosomal subunit; part of the 5S rRNA/L5/L18/L25 subcomplex. Contacts the 5S rRNA and the P site tRNA. Forms a bridge to the 30S subunit in the 70S ribosome.

Functionally, this is one of the proteins that bind and probably mediate the attachment of the 5S RNA into the large ribosomal subunit, where it forms part of the central protuberance. In the 70S ribosome it contacts protein S13 of the 30S subunit (bridge B1b), connecting the 2 subunits; this bridge is implicated in subunit movement. Contacts the P site tRNA; the 5S rRNA and some of its associated proteins might help stabilize positioning of ribosome-bound tRNAs. The protein is Large ribosomal subunit protein uL5 of Streptomyces griseus subsp. griseus (strain JCM 4626 / CBS 651.72 / NBRC 13350 / KCC S-0626 / ISP 5235).